Here is a 439-residue protein sequence, read N- to C-terminus: Type 3 secretion system ATPase (439 aa).

172-177 contacts ATP; the sequence is GGGKST.

The protein belongs to the ATPase alpha/beta chains family. T3SS ATPase subfamily. As to quaternary structure, the core secretion machinery of the T3SS is composed of approximately 20 different proteins, including cytoplasmic components, a base, an export apparatus and a needle. This subunit is part of the cytosolic complex. Forms homohexamers.

Its subcellular location is the cytoplasm. It carries out the reaction ATP + H2O + cellular proteinSide 1 = ADP + phosphate + cellular proteinSide 2.. In terms of biological role, ATPase component of the type III secretion system (T3SS), also called injectisome, which is used to inject bacterial effector proteins into eukaryotic host cells. Acts as a molecular motor to provide the energy that is required for the export of proteins. Required for type III secretion apparatus (T3SA) formation, proper protein secretion, host cell invasion and virulence. May play a critical role in T3SS substrate recognition, disassembly of the effector/chaperone complex and unfolding of the effector in an ATP-dependent manner prior to secretion. In Yersinia pseudotuberculosis serotype I (strain IP32953), this protein is Type 3 secretion system ATPase.